Reading from the N-terminus, the 759-residue chain is Phosphoribosylformylglycinamidine synthase subunit PurL (759 aa).

Residue His34 is part of the active site. ATP is bound at residue Tyr37. Glu95 contacts Mg(2+). Residues 96 to 99 (SHNH) and Arg118 each bind substrate. His97 functions as the Proton acceptor in the catalytic mechanism. Asp119 serves as a coordination point for Mg(2+). Gln243 contacts substrate. Asp271 contributes to the Mg(2+) binding site. 315 to 317 (ESQ) contributes to the substrate binding site. Residues 388-422 (DGAPMNDLASESPTQPDRDLPDPEPSLDEAVESVV) form a disordered region. Residues Asp520 and Gly557 each coordinate ATP. A Mg(2+)-binding site is contributed by Asn558. Ser560 provides a ligand contact to substrate.

Belongs to the FGAMS family. In terms of assembly, monomer. Part of the FGAM synthase complex composed of 1 PurL, 1 PurQ and 2 PurS subunits.

The protein localises to the cytoplasm. It catalyses the reaction N(2)-formyl-N(1)-(5-phospho-beta-D-ribosyl)glycinamide + L-glutamine + ATP + H2O = 2-formamido-N(1)-(5-O-phospho-beta-D-ribosyl)acetamidine + L-glutamate + ADP + phosphate + H(+). The protein operates within purine metabolism; IMP biosynthesis via de novo pathway; 5-amino-1-(5-phospho-D-ribosyl)imidazole from N(2)-formyl-N(1)-(5-phospho-D-ribosyl)glycinamide: step 1/2. Functionally, part of the phosphoribosylformylglycinamidine synthase complex involved in the purines biosynthetic pathway. Catalyzes the ATP-dependent conversion of formylglycinamide ribonucleotide (FGAR) and glutamine to yield formylglycinamidine ribonucleotide (FGAM) and glutamate. The FGAM synthase complex is composed of three subunits. PurQ produces an ammonia molecule by converting glutamine to glutamate. PurL transfers the ammonia molecule to FGAR to form FGAM in an ATP-dependent manner. PurS interacts with PurQ and PurL and is thought to assist in the transfer of the ammonia molecule from PurQ to PurL. This is Phosphoribosylformylglycinamidine synthase subunit PurL from Halorubrum lacusprofundi (strain ATCC 49239 / DSM 5036 / JCM 8891 / ACAM 34).